The following is a 180-amino-acid chain: Large ribosomal subunit protein uL6 (180 aa).

This sequence belongs to the universal ribosomal protein uL6 family. Part of the 50S ribosomal subunit.

Its function is as follows. This protein binds to the 23S rRNA, and is important in its secondary structure. It is located near the subunit interface in the base of the L7/L12 stalk, and near the tRNA binding site of the peptidyltransferase center. This chain is Large ribosomal subunit protein uL6, found in Flavobacterium johnsoniae (strain ATCC 17061 / DSM 2064 / JCM 8514 / BCRC 14874 / CCUG 350202 / NBRC 14942 / NCIMB 11054 / UW101) (Cytophaga johnsonae).